A 628-amino-acid chain; its full sequence is Probable potassium transport system protein Kup (628 aa).

The next 12 helical transmembrane spans lie at 12-32, 57-77, 106-126, 141-161, 174-194, 219-239, 253-273, 295-315, 343-363, 369-389, 402-422, and 425-445; these read ALPL…IGTS, LLSL…VMLV, WYLL…GVLT, ISPA…AAVF, FYGP…VYGI, LAGV…ALYA, WLFV…AILL, LLFL…TGVF, IYVG…VLGF, LASA…ILFV, AVIA…SANL, and LHEG…VMVS.

This sequence belongs to the HAK/KUP transporter (TC 2.A.72) family.

The protein localises to the cell inner membrane. It catalyses the reaction K(+)(in) + H(+)(in) = K(+)(out) + H(+)(out). Transport of potassium into the cell. Likely operates as a K(+):H(+) symporter. This chain is Probable potassium transport system protein Kup, found in Azorhizobium caulinodans (strain ATCC 43989 / DSM 5975 / JCM 20966 / LMG 6465 / NBRC 14845 / NCIMB 13405 / ORS 571).